Reading from the N-terminus, the 425-residue chain is Histidine--tRNA ligase 1 (425 aa).

It belongs to the class-II aminoacyl-tRNA synthetase family. In terms of assembly, homodimer.

It localises to the cytoplasm. It carries out the reaction tRNA(His) + L-histidine + ATP = L-histidyl-tRNA(His) + AMP + diphosphate + H(+). The protein is Histidine--tRNA ligase 1 of Bacillus thuringiensis subsp. konkukian (strain 97-27).